Here is a 72-residue protein sequence, read N- to C-terminus: NAD(P)H-quinone oxidoreductase subunit O (72 aa).

It belongs to the complex I NdhO subunit family. In terms of assembly, NDH-1 can be composed of about 15 different subunits; different subcomplexes with different compositions have been identified which probably have different functions.

Its subcellular location is the cellular thylakoid membrane. It carries out the reaction a plastoquinone + NADH + (n+1) H(+)(in) = a plastoquinol + NAD(+) + n H(+)(out). It catalyses the reaction a plastoquinone + NADPH + (n+1) H(+)(in) = a plastoquinol + NADP(+) + n H(+)(out). NDH-1 shuttles electrons from an unknown electron donor, via FMN and iron-sulfur (Fe-S) centers, to quinones in the respiratory and/or the photosynthetic chain. The immediate electron acceptor for the enzyme in this species is believed to be plastoquinone. Couples the redox reaction to proton translocation, and thus conserves the redox energy in a proton gradient. Cyanobacterial NDH-1 also plays a role in inorganic carbon-concentration. This chain is NAD(P)H-quinone oxidoreductase subunit O, found in Rippkaea orientalis (strain PCC 8801 / RF-1) (Cyanothece sp. (strain PCC 8801)).